The primary structure comprises 326 residues: Apoptosis facilitator Bcl-2-like protein 14 (326 aa).

A Phosphoserine modification is found at Ser44. Residues 100 to 147 are disordered; sequence AEKEEDSQSSPPEICAQAQRSGVPQARPRSPKWPRSRSSMDQRLEHKA. A compositionally biased stretch (basic and acidic residues) spans 137–147; that stretch reads SSMDQRLEHKA. The BH3 motif lies at 211 to 225; sequence IVELLKYSGEQLERE. The BH2 signature appears at 307–314; the sequence is WIQQHGGW.

The protein belongs to the Bcl-2 family. Phosphorylated by MELK, leading to inhibit its pro-apoptotic function.

It is found in the cytoplasm. Its function is as follows. Plays a role in apoptosis. The protein is Apoptosis facilitator Bcl-2-like protein 14 (BCL2L14) of Bos taurus (Bovine).